The chain runs to 214 residues: Probable GTP-binding protein EngB (214 aa).

The 176-residue stretch at G24–L199 folds into the EngB-type G domain. Residues G32–S39, G59–Q63, D77–G80, T144–D147, and Y178–G180 each bind GTP. Mg(2+)-binding residues include S39 and T61.

Belongs to the TRAFAC class TrmE-Era-EngA-EngB-Septin-like GTPase superfamily. EngB GTPase family. The cofactor is Mg(2+).

Its function is as follows. Necessary for normal cell division and for the maintenance of normal septation. In Xanthomonas axonopodis pv. citri (strain 306), this protein is Probable GTP-binding protein EngB.